The sequence spans 160 residues: uncharacterized protein (160 aa).

4 helical membrane passes run 7-27, 48-68, 95-115, and 121-141; these read IFLK…CIFL, LVFI…YQAF, AVTI…MAEI, and IIVI…FAAV.

The protein localises to the cell membrane. This is an uncharacterized protein from Bacillus subtilis (strain 168).